Consider the following 205-residue polypeptide: Ras-related protein RABB1a (205 aa).

13–20 provides a ligand contact to GTP; that stretch reads GDTGVGKS. Residues 35 to 43 carry the Effector region motif; sequence HDLTIGVEF. GTP-binding positions include 61–65, 119–122, and 149–150; these read DTAGQ, NKCD, and SA. Positions 179–205 are disordered; it reads ANEPGITPGPFGGKDASSSQQRRGCCG. Residues 194–205 show a composition bias toward polar residues; the sequence is ASSSQQRRGCCG. 2 S-geranylgeranyl cysteine lipidation sites follow: Cys-203 and Cys-204.

The protein belongs to the small GTPase superfamily. Rab family.

Its subcellular location is the cell membrane. Its function is as follows. Intracellular vesicle trafficking and protein transport. This Arabidopsis thaliana (Mouse-ear cress) protein is Ras-related protein RABB1a (RABB1A).